The following is a 205-amino-acid chain: Macrophage immunometabolism regulator (205 aa).

Residues methionine 1–serine 40 are disordered. Over residues valine 8 to serine 25 the composition is skewed to polar residues.

Belongs to the UNC119-binding protein family. As to quaternary structure, interacts with unc119 family proteins; interaction preferentially takes place when unc119 proteins are unliganded with myristoylated proteins.

It localises to the cytoplasm. Its subcellular location is the cell projection. It is found in the cilium. In terms of biological role, may play a role in immune regulation through regulation of the macrophage function. May also play a role in trafficking of proteins via its interaction with unc119 family cargo adapters. May play a role in ciliary membrane localization. This is Macrophage immunometabolism regulator (macir) from Xenopus laevis (African clawed frog).